We begin with the raw amino-acid sequence, 270 residues long: Protein MGF 110-1L (270 aa).

Positions 1-26 (MLGLQIFTLLSIPTLLYTYEIEPLER) are cleaved as a signal peptide. At 27–117 (TSTPPEKEFG…HERHEADIRK (91 aa)) the chain is on the extracellular side. The stretch at 27 to 146 (TSTPPEKEFG…YIRKRSLQTV (120 aa)) is one A repeat. Asparagine 75 is a glycosylation site (N-linked (GlcNAc...) asparagine; by host). A helical membrane pass occupies residues 118–138 (WQKLLTYGFYLAGCILAVNYI). At 139–145 (RKRSLQT) the chain is on the cytoplasmic side. Residues 146–166 (VMYLLVFLVISFLLSQLMLYG) traverse the membrane as a helical segment. The stretch at 147 to 270 (MYLLVFLVIS…DNLMKKQDIM (124 aa)) is one B repeat. Over 167–270 (ELEDKKHKIG…DNLMKKQDIM (104 aa)) the chain is Extracellular.

Belongs to the asfivirus MGF 110 family.

The protein localises to the membrane. Its function is as follows. Plays a role in virus cell tropism, and may be required for efficient virus replication in macrophages. The protein is Protein MGF 110-1L of African swine fever virus (isolate Pig/Portugal/OURT88/1988) (ASFV).